Consider the following 264-residue polypeptide: MKILQQDDFGYWLLTQGSNLYLVNNELPFGIAKDIDLEGLQAMQIGEWKNYPLWLVAEQESDEREYVSLSNLLSLPEDEFHILSRGVEINHFLKTHKFCGKCGHKTQQTQDELAVQCIHCGYQTYPVICPSIIVAVRRGHEILLANHKRHYSPNGGIYTTLAGFVEVGETFEQAVQREVFEETGISIKNLRYFGSQPWAFPNSQMVGFLADYESGEITLQESEIHDAQWFSYDQPLPELPPTGTIARKLIHVTLELCKAEHKCD.

The Zn(2+) site is built by Cys-99 and Cys-102. Glu-112 serves as a coordination point for substrate. Positions 117 and 120 each coordinate Zn(2+). Tyr-125 contacts substrate. The 128-residue stretch at 126-253 folds into the Nudix hydrolase domain; that stretch reads PVICPSIIVA…TIARKLIHVT (128 aa). 3 residues coordinate a divalent metal cation: Ala-162, Glu-178, and Glu-182. Residues 163 to 184 carry the Nudix box motif; it reads GFVEVGETFEQAVQREVFEETG. 196–203 provides a ligand contact to substrate; it reads QPWAFPNS. Glu-223 is an a divalent metal cation binding site. Ala-246 is a binding site for substrate.

Belongs to the Nudix hydrolase family. NudC subfamily. In terms of assembly, homodimer. Mg(2+) is required as a cofactor. The cofactor is Mn(2+). Requires Zn(2+) as cofactor.

It catalyses the reaction a 5'-end NAD(+)-phospho-ribonucleoside in mRNA + H2O = a 5'-end phospho-adenosine-phospho-ribonucleoside in mRNA + beta-nicotinamide D-ribonucleotide + 2 H(+). The catalysed reaction is NAD(+) + H2O = beta-nicotinamide D-ribonucleotide + AMP + 2 H(+). The enzyme catalyses NADH + H2O = reduced beta-nicotinamide D-ribonucleotide + AMP + 2 H(+). In terms of biological role, mRNA decapping enzyme that specifically removes the nicotinamide adenine dinucleotide (NAD) cap from a subset of mRNAs by hydrolyzing the diphosphate linkage to produce nicotinamide mononucleotide (NMN) and 5' monophosphate mRNA. The NAD-cap is present at the 5'-end of some mRNAs and stabilizes RNA against 5'-processing. Has preference for mRNAs with a 5'-end purine. Catalyzes the hydrolysis of a broad range of dinucleotide pyrophosphates. The chain is NAD-capped RNA hydrolase NudC from Haemophilus influenzae (strain ATCC 51907 / DSM 11121 / KW20 / Rd).